We begin with the raw amino-acid sequence, 366 residues long: UDP-N-acetylglucosamine--N-acetylmuramyl-(pentapeptide) pyrophosphoryl-undecaprenol N-acetylglucosamine transferase (366 aa).

UDP-N-acetyl-alpha-D-glucosamine is bound by residues 10 to 12 (TGG), Asn-124, Ser-195, and Gln-295.

The protein belongs to the glycosyltransferase 28 family. MurG subfamily.

The protein localises to the cell membrane. It carries out the reaction di-trans,octa-cis-undecaprenyl diphospho-N-acetyl-alpha-D-muramoyl-L-alanyl-D-glutamyl-meso-2,6-diaminopimeloyl-D-alanyl-D-alanine + UDP-N-acetyl-alpha-D-glucosamine = di-trans,octa-cis-undecaprenyl diphospho-[N-acetyl-alpha-D-glucosaminyl-(1-&gt;4)]-N-acetyl-alpha-D-muramoyl-L-alanyl-D-glutamyl-meso-2,6-diaminopimeloyl-D-alanyl-D-alanine + UDP + H(+). It functions in the pathway cell wall biogenesis; peptidoglycan biosynthesis. Cell wall formation. Catalyzes the transfer of a GlcNAc subunit on undecaprenyl-pyrophosphoryl-MurNAc-pentapeptide (lipid intermediate I) to form undecaprenyl-pyrophosphoryl-MurNAc-(pentapeptide)GlcNAc (lipid intermediate II). The sequence is that of UDP-N-acetylglucosamine--N-acetylmuramyl-(pentapeptide) pyrophosphoryl-undecaprenol N-acetylglucosamine transferase from Bacillus licheniformis (strain ATCC 14580 / DSM 13 / JCM 2505 / CCUG 7422 / NBRC 12200 / NCIMB 9375 / NCTC 10341 / NRRL NRS-1264 / Gibson 46).